Here is a 366-residue protein sequence, read N- to C-terminus: MAQRVQEEDEQMTSTDDLIQAEIELYHHCFAFIKSTALRAATDLCISDAIHRNGGAATLSDLALNIGLHPTKLSHLRRLMRVPTVSGVFAVEDHNGEAMYTLTRVSRLLLNGDGERTHALSHLVRVLVNPLTVASHFSIHEWFTIEQAAAMTPFEVAHGCTRWEIIANDAKDGSVFNTAMVEDSRVAMDIILKESCGVFQGISSLVDVGGGHGAAAAAIATAFPNIKCTVLDLPHIVAEAPTTHSNIQFVGGDFFEFIPAADVVLLKYILHAWQDDDCVKILRRCKEAILARDAGGKVIIIEVVVGIGPKEIVPKEMQILFDVFMMYVDGIEREEHEWKKIFLEAGFSDYKITPVLGARSIIEVYP.

Residues glycine 209, aspartate 232, aspartate 253, and lysine 267 each contribute to the S-adenosyl-L-homocysteine site. Histidine 271 functions as the Proton acceptor in the catalytic mechanism. Catalysis depends on residues glutamate 302 and glutamate 332.

It belongs to the class I-like SAM-binding methyltransferase superfamily. Cation-independent O-methyltransferase family. Homodimer. In terms of tissue distribution, expressed at low levels in roots, shoots, leaves, stems and flowers.

It localises to the cytoplasm. It carries out the reaction N-acetylserotonin + S-adenosyl-L-methionine = melatonin + S-adenosyl-L-homocysteine + H(+). The protein operates within aromatic compound metabolism; melatonin biosynthesis; melatonin from serotonin: step 1/2. Its function is as follows. Methyltransferase which catalyzes the transfer of a methyl group onto N-acetylserotonin, producing melatonin (N-acetyl-5-methoxytryptamine). This chain is Acetylserotonin O-methyltransferase 3, found in Oryza sativa subsp. japonica (Rice).